We begin with the raw amino-acid sequence, 138 residues long: Large ribosomal subunit protein uL16 (138 aa).

Positions 1–15 (MLSPKKVKYRKKQRG) are enriched in basic residues. Positions 1-21 (MLSPKKVKYRKKQRGRLSGEA) are disordered.

This sequence belongs to the universal ribosomal protein uL16 family. As to quaternary structure, part of the 50S ribosomal subunit.

Functionally, binds 23S rRNA and is also seen to make contacts with the A and possibly P site tRNAs. This Borreliella afzelii (strain PKo) (Borrelia afzelii) protein is Large ribosomal subunit protein uL16.